Consider the following 359-residue polypeptide: Phospho-N-acetylmuramoyl-pentapeptide-transferase (359 aa).

The next 10 membrane-spanning stretches (helical) occupy residues 3-23 (LILIAVGIALAVSILLTPALI), 55-75 (VAILAGIWAGYLGSHLVGMAM), 80-100 (PSASGLLVLGLATVLGGVGFI), 117-137 (TAKTVGQLFAAVLFGVLALQF), 156-176 (IATVTLAPALFVLFCVVVVSA), 187-207 (LDGLAAGAMAMVTAAYVLITF), 231-251 (LALVAAATAGACVGFLWWNAA), 255-275 (IFMGDTGSLALGGIIAGISVT), 280-300 (ILAVVLGALFVAEVTSVVVQI), and 334-354 (FWLLTAIACGLGVALFYGEWL).

It belongs to the glycosyltransferase 4 family. MraY subfamily. Mg(2+) is required as a cofactor.

The protein localises to the cell membrane. It catalyses the reaction UDP-N-acetyl-alpha-D-muramoyl-L-alanyl-gamma-D-glutamyl-meso-2,6-diaminopimeloyl-D-alanyl-D-alanine + di-trans,octa-cis-undecaprenyl phosphate = di-trans,octa-cis-undecaprenyl diphospho-N-acetyl-alpha-D-muramoyl-L-alanyl-D-glutamyl-meso-2,6-diaminopimeloyl-D-alanyl-D-alanine + UMP. The protein operates within cell wall biogenesis; peptidoglycan biosynthesis. Functionally, catalyzes the initial step of the lipid cycle reactions in the biosynthesis of the cell wall peptidoglycan: transfers peptidoglycan precursor phospho-MurNAc-pentapeptide from UDP-MurNAc-pentapeptide onto the lipid carrier undecaprenyl phosphate, yielding undecaprenyl-pyrophosphoryl-MurNAc-pentapeptide, known as lipid I. In Mycolicibacterium smegmatis (strain ATCC 700084 / mc(2)155) (Mycobacterium smegmatis), this protein is Phospho-N-acetylmuramoyl-pentapeptide-transferase.